Reading from the N-terminus, the 432-residue chain is C-type cytochrome OmcS (432 aa).

An N-terminal signal peptide occupies residues M1–A25.

Heme is required as a cofactor.

It is found in the cell outer membrane. It localises to the cell surface. Its function is as follows. Plays an important role in extracellular electron transfer. Can transfer electrons to insoluble Fe(3+) oxides as well as other extracellular electron acceptors, including Mn(4+) oxide and humic substances. Essential for direct interspecies electron transfer (DIET) in cocultures with G.metallireducens. In Geobacter sulfurreducens (strain ATCC 51573 / DSM 12127 / PCA), this protein is C-type cytochrome OmcS.